Reading from the N-terminus, the 258-residue chain is Tryptophan synthase alpha chain (258 aa).

Residues glutamate 52 and aspartate 63 each act as proton acceptor in the active site.

It belongs to the TrpA family. Tetramer of two alpha and two beta chains.

It catalyses the reaction (1S,2R)-1-C-(indol-3-yl)glycerol 3-phosphate + L-serine = D-glyceraldehyde 3-phosphate + L-tryptophan + H2O. Its pathway is amino-acid biosynthesis; L-tryptophan biosynthesis; L-tryptophan from chorismate: step 5/5. Its function is as follows. The alpha subunit is responsible for the aldol cleavage of indoleglycerol phosphate to indole and glyceraldehyde 3-phosphate. This chain is Tryptophan synthase alpha chain, found in Streptococcus pneumoniae (strain JJA).